Consider the following 491-residue polypeptide: Trypanothione reductase (491 aa).

FAD is bound at residue 35–51 (DLQKHHGPPHYAALGGT). The cysteines at positions 52 and 57 are disulfide-linked. The active-site Proton acceptor is the His-461.

Belongs to the class-I pyridine nucleotide-disulfide oxidoreductase family. As to quaternary structure, homodimer. Requires FAD as cofactor. In terms of processing, the N-terminus is blocked.

Its subcellular location is the cytoplasm. The enzyme catalyses trypanothione + NADP(+) = trypanothione disulfide + NADPH + H(+). In terms of biological role, trypanothione is the parasite analog of glutathione; this enzyme is the equivalent of glutathione reductase. This is Trypanothione reductase (TPR) from Crithidia fasciculata.